Here is a 288-residue protein sequence, read N- to C-terminus: Phosphatidylserine decarboxylase proenzyme (288 aa).

Active-site charge relay system; for autoendoproteolytic cleavage activity residues include D92, H149, and S254. The active-site Schiff-base intermediate with substrate; via pyruvic acid; for decarboxylase activity is S254. A Pyruvic acid (Ser); by autocatalysis modification is found at S254.

This sequence belongs to the phosphatidylserine decarboxylase family. PSD-B subfamily. Prokaryotic type I sub-subfamily. Heterodimer of a large membrane-associated beta subunit and a small pyruvoyl-containing alpha subunit. The cofactor is pyruvate. In terms of processing, is synthesized initially as an inactive proenzyme. Formation of the active enzyme involves a self-maturation process in which the active site pyruvoyl group is generated from an internal serine residue via an autocatalytic post-translational modification. Two non-identical subunits are generated from the proenzyme in this reaction, and the pyruvate is formed at the N-terminus of the alpha chain, which is derived from the carboxyl end of the proenzyme. The autoendoproteolytic cleavage occurs by a canonical serine protease mechanism, in which the side chain hydroxyl group of the serine supplies its oxygen atom to form the C-terminus of the beta chain, while the remainder of the serine residue undergoes an oxidative deamination to produce ammonia and the pyruvoyl prosthetic group on the alpha chain. During this reaction, the Ser that is part of the protease active site of the proenzyme becomes the pyruvoyl prosthetic group, which constitutes an essential element of the active site of the mature decarboxylase.

The protein localises to the cell membrane. The catalysed reaction is a 1,2-diacyl-sn-glycero-3-phospho-L-serine + H(+) = a 1,2-diacyl-sn-glycero-3-phosphoethanolamine + CO2. The protein operates within phospholipid metabolism; phosphatidylethanolamine biosynthesis; phosphatidylethanolamine from CDP-diacylglycerol: step 2/2. Its function is as follows. Catalyzes the formation of phosphatidylethanolamine (PtdEtn) from phosphatidylserine (PtdSer). This chain is Phosphatidylserine decarboxylase proenzyme, found in Bordetella petrii (strain ATCC BAA-461 / DSM 12804 / CCUG 43448).